We begin with the raw amino-acid sequence, 579 residues long: Zinc finger-containing ubiquitin peptidase 1 (579 aa).

A C2H2-type 1 zinc finger spans residues 2-25 (LSCDICGETVSSEPDMKAHLLIVH). Residues 30–53 (VICPFCKLSGVNYDEMCFHIETAH) form a C2H2-type 2; atypical zinc finger. 2 C2H2-type zinc fingers span residues 155 to 178 (PECPFCGKIEDNSQDMETHVKTKH) and 194 to 216 (YDCPMCGLVCTNYHILQEHVDLH). The MIU stretch occupies residues 227 to 249 (NRVQCSRDLELAQQLQQEEDRKR). The segment at 250–275 (RSEESRQEMEEFQKLQRQYGLDNSGG) is zUBD/ZHA. Lysine 263 is modified (N6-acetyllysine). Residue cysteine 361 is the Nucleophile of the active site. The active-site Proton acceptor is histidine 492. Residue aspartate 513 is part of the active site.

Belongs to the peptidase C78 family. ZUFSP subfamily. Interacts with RPA1 and RPA2.

It localises to the cytoplasm. It is found in the nucleus. The enzyme catalyses Thiol-dependent hydrolysis of ester, thioester, amide, peptide and isopeptide bonds formed by the C-terminal Gly of ubiquitin (a 76-residue protein attached to proteins as an intracellular targeting signal).. Deubiquitinase with endodeubiquitinase activity that specifically interacts with and cleaves 'Lys-63'-linked long polyubiquitin chains. Shows only weak activity against 'Lys-11' and 'Lys-48'-linked chains. Plays an important role in genome stability pathways, functioning to prevent spontaneous DNA damage and also promote cellular survival in response to exogenous DNA damage. Modulates the ubiquitination status of replication protein A (RPA) complex proteins in response to replication stress. This is Zinc finger-containing ubiquitin peptidase 1 from Bos taurus (Bovine).